Reading from the N-terminus, the 173-residue chain is Crossover junction endodeoxyribonuclease RuvC (173 aa).

Residues Asp8, Glu67, and Asp139 contribute to the active site. Mg(2+) is bound by residues Asp8, Glu67, and Asp139.

This sequence belongs to the RuvC family. In terms of assembly, homodimer which binds Holliday junction (HJ) DNA. The HJ becomes 2-fold symmetrical on binding to RuvC with unstacked arms; it has a different conformation from HJ DNA in complex with RuvA. In the full resolvosome a probable DNA-RuvA(4)-RuvB(12)-RuvC(2) complex forms which resolves the HJ. Mg(2+) serves as cofactor.

Its subcellular location is the cytoplasm. The enzyme catalyses Endonucleolytic cleavage at a junction such as a reciprocal single-stranded crossover between two homologous DNA duplexes (Holliday junction).. Functionally, the RuvA-RuvB-RuvC complex processes Holliday junction (HJ) DNA during genetic recombination and DNA repair. Endonuclease that resolves HJ intermediates. Cleaves cruciform DNA by making single-stranded nicks across the HJ at symmetrical positions within the homologous arms, yielding a 5'-phosphate and a 3'-hydroxyl group; requires a central core of homology in the junction. The consensus cleavage sequence is 5'-(A/T)TT(C/G)-3'. Cleavage occurs on the 3'-side of the TT dinucleotide at the point of strand exchange. HJ branch migration catalyzed by RuvA-RuvB allows RuvC to scan DNA until it finds its consensus sequence, where it cleaves and resolves the cruciform DNA. The protein is Crossover junction endodeoxyribonuclease RuvC of Aliivibrio fischeri (strain ATCC 700601 / ES114) (Vibrio fischeri).